Reading from the N-terminus, the 443-residue chain is 23S rRNA (uracil(1939)-C(5))-methyltransferase RlmD (443 aa).

The TRAM domain occupies 8–66 (KPLPAEPIAAHIESFAHDGKGIAHVDGRVVFVDGALPGEDVTFVYTEIKRDYAAGRVVE). The [4Fe-4S] cluster site is built by C79, C85, C88, and C167. Residues Q276, F305, N310, E326, D353, and D374 each contribute to the S-adenosyl-L-methionine site. Residue C400 is the Nucleophile of the active site.

This sequence belongs to the class I-like SAM-binding methyltransferase superfamily. RNA M5U methyltransferase family. RlmD subfamily.

It catalyses the reaction uridine(1939) in 23S rRNA + S-adenosyl-L-methionine = 5-methyluridine(1939) in 23S rRNA + S-adenosyl-L-homocysteine + H(+). Functionally, catalyzes the formation of 5-methyl-uridine at position 1939 (m5U1939) in 23S rRNA. The sequence is that of 23S rRNA (uracil(1939)-C(5))-methyltransferase RlmD from Methylococcus capsulatus (strain ATCC 33009 / NCIMB 11132 / Bath).